We begin with the raw amino-acid sequence, 216 residues long: Uracil phosphoribosyltransferase (216 aa).

5-phospho-alpha-D-ribose 1-diphosphate is bound by residues Arg-84, Arg-109, and 137-145; that span reads DPMLATGGS. Uracil-binding positions include Ile-202 and 207–209; that span reads GDA. 5-phospho-alpha-D-ribose 1-diphosphate is bound at residue Asp-208.

It belongs to the UPRTase family. It depends on Mg(2+) as a cofactor.

The enzyme catalyses UMP + diphosphate = 5-phospho-alpha-D-ribose 1-diphosphate + uracil. It participates in pyrimidine metabolism; UMP biosynthesis via salvage pathway; UMP from uracil: step 1/1. With respect to regulation, allosterically activated by GTP. Functionally, catalyzes the conversion of uracil and 5-phospho-alpha-D-ribose 1-diphosphate (PRPP) to UMP and diphosphate. The protein is Uracil phosphoribosyltransferase of Nostoc sp. (strain PCC 7120 / SAG 25.82 / UTEX 2576).